We begin with the raw amino-acid sequence, 185 residues long: Lectin B4 (185 aa).

A glycan (N-linked (GlcNAc...) asparagine) is linked at Asn-48. Residues Glu-111 and Asp-113 each coordinate Mn(2+). Residues Asp-113, Tyr-115, Asn-117, and Asp-120 each coordinate Ca(2+). Asp-120 contributes to the Mn(2+) binding site. Asn-122 is a glycosylation site (N-linked (GlcNAc...) asparagine). Mn(2+) is bound at residue His-125.

It belongs to the leguminous lectin family. In terms of assembly, homo- or heterotetramer. V.villosa isolectins are composed of either two subunits a and two subunits B (A2B2), four subunits A (A4), or four subunits B (B4). The predominant form, isolectin B4, has no A1 erythrocyte agglutinating activity.

Functionally, N-acetyl-D-galactosamine specific lectin. Binds the Tn determinant (GalNAc-alpha-O-Ser/Thr) of the tumor-associated glycopeptide. Could be required for agglutinating cells such as Tn-exposed erythrocytes. This is Lectin B4 from Vicia villosa (Hairy vetch).